We begin with the raw amino-acid sequence, 562 residues long: MISISSTRVPLIPPEDIPLEDKKENEFGQLTSEEYLYQSKSRDGKALQDPILDAPAYHVSLITYLNYLILIILGHIHDFLGLTFQKEKHKDIMEQDGLAPWFSTFESFYVRRLKQRIDDCFSRPTTGVPGRFIRCLDRVSHNLNDYFTYPGTTSMCLNLSSYNYLGFAQSEGQCTTAALEATDKYGVYSGGPRTRIGTTDLHVMTEKYVAQFVGKEDAILFSMGYGTNANFFNSFLDSKCLVISDSLNHTSIRTGVRLSGAAVKTFKHNDMRALEKLIREQIVQGQSKTHRPWKKIIICVEGLYSMEGTMANLPKLVELKKKYKCYLFVDEAHSIGAMGPSGRGVCDFFGIPCSDIDIMMGTLTKSFGAAGGYIAADKWIIDRFRLDLTTPHYGEPTPAPVLAQIASSLKTITGDINPGEGQERLQRIAFNARYLRLALQRLGFIVYGIADSPVIPMLLYAPSKMPAFSRMMLQRKIAVVVVAYPATPLIESRVRFCVSAALTKEDIDYLLQHINEVGDKLFLKVSSGKAGGSLDGKPPRWNIDEVIKRTPTDCKDDSFFRI.

A helical membrane pass occupies residues Leu-61–Gly-81. Lys-365 carries the N6-(pyridoxal phosphate)lysine modification.

It belongs to the class-II pyridoxal-phosphate-dependent aminotransferase family. Pyridoxal 5'-phosphate serves as cofactor.

It localises to the membrane. The enzyme catalyses L-serine + hexadecanoyl-CoA + H(+) = 3-oxosphinganine + CO2 + CoA. It participates in lipid metabolism; sphingolipid metabolism. This is Serine palmitoyltransferase 2 (LCB2) from Kluyveromyces lactis (strain ATCC 8585 / CBS 2359 / DSM 70799 / NBRC 1267 / NRRL Y-1140 / WM37) (Yeast).